The following is a 418-amino-acid chain: RapA guanosine triphosphatase-activating protein B (418 aa).

Residues 142–407 (LVKVCEPEFN…EKASALINVI (266 aa)) form the Rap-GAP domain. Residues 304–339 (NRVVGEQPSPSLTTTTTTTTTTSPTINSNSPTPSNK) are disordered. A compositionally biased stretch (low complexity) spans 311–338 (PSPSLTTTTTTTTTTSPTINSNSPTPSN).

Its function is as follows. Mediates the deactivation of rap1 during multicellular development and is required for normal morphogenesis. Also required for the correct patterning of specific subtypes of prestalk cells. The chain is RapA guanosine triphosphatase-activating protein B (rapgapB) from Dictyostelium discoideum (Social amoeba).